We begin with the raw amino-acid sequence, 680 residues long: DNA ligase 1 (680 aa).

Residues 35–39 (DAEYD), 84–85 (SL), and aspartate 115 each bind NAD(+). The active-site N6-AMP-lysine intermediate is lysine 117. Positions 138, 175, 295, and 319 each coordinate NAD(+). Residues cysteine 413, cysteine 416, cysteine 431, and cysteine 436 each coordinate Zn(2+). Positions 599–680 (REGSQLQGLK…FANLLKGLDR (82 aa)) constitute a BRCT domain.

The protein belongs to the NAD-dependent DNA ligase family. LigA subfamily. It depends on Mg(2+) as a cofactor. The cofactor is Mn(2+).

It carries out the reaction NAD(+) + (deoxyribonucleotide)n-3'-hydroxyl + 5'-phospho-(deoxyribonucleotide)m = (deoxyribonucleotide)n+m + AMP + beta-nicotinamide D-nucleotide.. In terms of biological role, DNA ligase that catalyzes the formation of phosphodiester linkages between 5'-phosphoryl and 3'-hydroxyl groups in double-stranded DNA using NAD as a coenzyme and as the energy source for the reaction. It is essential for DNA replication and repair of damaged DNA. In Nitratidesulfovibrio vulgaris (strain DP4) (Desulfovibrio vulgaris), this protein is DNA ligase 1.